A 63-amino-acid polypeptide reads, in one-letter code: Large ribosomal subunit protein bL28 (63 aa).

The protein belongs to the bacterial ribosomal protein bL28 family.

This is Large ribosomal subunit protein bL28 from Clostridium beijerinckii (strain ATCC 51743 / NCIMB 8052) (Clostridium acetobutylicum).